The chain runs to 565 residues: MLLAQINRDSQAMAEFPGGGGEAQHVTLCLTEAVADGESMDTMEGMSLQAVTLADGSTAYIQHNTKDGKLIEGQVIQLEDGSAAYVQHVPKGDDLSLEDGQAVQLEDGTTAYIHHSSKDSYDQSSVQAVQLEDGTTAYIHHAVQVPQSDTILAIQADGTVAGLHTGEASIDPDTISALEQYAAKVSIEGGEGAGSNALINESESEKKMQIVLSHGARLPIKAQQTNEKAFRCDYEGCGKLYTTAHHLKVHERSHTGDRPYQCDHGSCRKAFATGYGLKSHVRTHTGEKPYRCSEENCTKSFKTSGDLQKHVRTHTGERPFKCPFEGCGRSFTTSNIRKVHIRTHTGERPYYCSEPGCGRAFASATNYKNHVRIHTGEKPYVCTVPGCDKRFTEYSSLYKHHVVHTHSKPYNCNHCGKTYKQISTLAMHKRTAHNDTEPIEEDQESFFVPQPPDEVIKGSQITYVTGVDGEDGISATQSGQQLALIAQDGTSHVAIVAQDLSAFHNSETGPQHSHNLGGSDSRPVTLLATSNGRQIAVQIGEQQSLEEAIRIASRIQQGESPGMED.

7 consecutive C2H2-type zinc fingers follow at residues 230–254, 260–284, 290–314, 320–344, 350–374, 380–404, and 410–433; these read FRCDYEGCGKLYTTAHHLKVHERSH, YQCDHGSCRKAFATGYGLKSHVRTH, YRCSEENCTKSFKTSGDLQKHVRTH, FKCPFEGCGRSFTTSNIRKVHIRTH, YYCSEPGCGRAFASATNYKNHVRIH, YVCTVPGCDKRFTEYSSLYKHHVVH, and YNCNHCGKTYKQISTLAMHKRTAH.

Belongs to the GLI C2H2-type zinc-finger protein family.

Its subcellular location is the nucleus. In terms of biological role, transcriptional activator. Activates the gene for selenocysteine tRNA (tRNAsec). Binds to the activator element (AE) motif of the selenocysteine tRNA gene promoter. The polypeptide is Zinc finger protein 143 (znf143) (Xenopus laevis (African clawed frog)).